The sequence spans 342 residues: Nucleoid-associated protein Shewmr4_2217 (342 aa).

The protein belongs to the YejK family.

It localises to the cytoplasm. The protein resides in the nucleoid. The sequence is that of Nucleoid-associated protein Shewmr4_2217 from Shewanella sp. (strain MR-4).